Consider the following 1013-residue polypeptide: MTNFKFSLLACSIAFALNASTAYAAQPTNQPTNQPTNQPTNQPTNQPTNQPTNQPTNQDSNLSEQLEQINVSGSTENSDSKTPPKIAETVKTAKTLEREQANNIKDIVKYETGVTVVEAGRFGQSGFAIRGVDENRVAINIDGLRQAETLSSQGFKELFEGYGNFNNTRNGAEIETLKEVNITKGANSIKSGSGSLGGSVIYKTKDARDYLLNKDYYVSYKKGYATENNQSFNTLTLAGRYKKFDVLVVTTSRNGHELENYGYKNYNDKIQGKRREKADPYKIEQDSTLLKLSFNPTENHRFTLAADLYEHRSRGQDLSYTLKYLKTLPDLPEVDSRHTNDKTKRHNISFSYENFSQTPFWDTLKITFSKQKIKTRARTDEYCDAGVRYCEGTANPAGLKLKNGEITRRDGTPLQFKEINNTTTPNSNSNKDKTYDFSKLIDTNGKEIESGITRSNDTFWYDCSIFDCENPGKMKVAEGKTYYRYDGTWKNNVQLEKKVLNGKEFARINNGTRGKTFPILPSSLGYLERLWQERDLDTNTQQLNLDLTKDFKTWRVEHNLQYGSSYNTTMKRMVNRAGYDATDVQWWAKRTLGTRFDFLKNEEIVETCATTFGWNAFLCPRVDPEFSYLLPIKTKEKSVYLFDNVVITDYLSFDLGYRYDNIHYQPKYKHGVTPKLPDDIVKELFIPLKSGQNNNDAEVKKNVQENIDYIAKQNKKYKAHSYSFVSTIDPTSFLRLQLKYSKGFRAPTSDEMYFTFKHPDFTILPNTHLKPEIAKTKEIAFTLHHDDWGFISTSLFKTNYRDFIDLVYKGEREFEVGNPNNRGKISFDTFQNINRDSAVVKGIEINSKVFLGKMAKFMDGFNLSYKYTYQKGRMDGNIPMNAIQPKTMVYGLGYDHPSQKFGFNFYTTHVASKNPEDTYDIYAKDKNQTNTSIKWRSKSYTILDLIGYVQPIKNLTIRAGVYNLTNRKYITWDSARSIRSFGTSNVIDQKTGQGINRFYAPGRNYKMSVQFEF.

A signal peptide spans 1 to 24; it reads MTNFKFSLLACSIAFALNASTAYA. 8 tandem repeats follow at residues 26-29, 30-33, 34-37, 38-41, 42-45, 46-49, 50-53, and 54-57. The segment at 26 to 57 is 8 X 4 AA tandem repeats of Q-P-T-N; it reads QPTNQPTNQPTNQPTNQPTNQPTNQPTNQPTN. A compositionally biased stretch (low complexity) spans 26-58; that stretch reads QPTNQPTNQPTNQPTNQPTNQPTNQPTNQPTNQ. A disordered region spans residues 26–61; the sequence is QPTNQPTNQPTNQPTNQPTNQPTNQPTNQPTNQDSN. Positions 67–74 match the TonB box motif; that stretch reads EQINVSGS. One can recognise a TBDR plug domain in the interval 78-205; sequence SDSKTPPKIA…LGGSVIYKTK (128 aa). In terms of domain architecture, TBDR beta-barrel spans 213–1013; it reads NKDYYVSYKK…NYKMSVQFEF (801 aa). A TonB C-terminal box motif is present at residues 996–1013; sequence NRFYAPGRNYKMSVQFEF.

The protein belongs to the TonB-dependent receptor family. Hemoglobin/haptoglobin binding protein subfamily.

It is found in the cell outer membrane. Acts as a receptor for hemoglobin of the human host and is required for heme uptake. This chain is Hemoglobin-binding protein A (hgbA), found in Haemophilus influenzae.